Reading from the N-terminus, the 319-residue chain is Histone-lysine N-methyltransferase set5 (319 aa).

The SET domain maps to 4 to 141 (YETEIYKVVP…AGEEILTTYI (138 aa)). A Phosphoserine modification is found at S316. T318 is subject to Phosphothreonine.

It belongs to the class V-like SAM-binding methyltransferase superfamily.

The protein resides in the nucleus. It is found in the chromosome. It localises to the cytoplasm. It catalyses the reaction L-lysyl-[histone] + S-adenosyl-L-methionine = N(6)-methyl-L-lysyl-[histone] + S-adenosyl-L-homocysteine + H(+). Functionally, histone methyltransferase that monomethylates 'Lys-5', 'Lys-8' and 'Lys-12' of histone H4 (H4K5me1, H4K8me1 and H4K12me1, respectively), thereby controlling gene expression and remodeling chromatin structures. Monomethylation of 'Lys-5' of histone H4 (H4K5me1) is required for subsequent acetylation and formation of N6-acetyl-N6-methyllysine (H4K5acme). The protein is Histone-lysine N-methyltransferase set5 (set5) of Schizosaccharomyces pombe (strain 972 / ATCC 24843) (Fission yeast).